A 256-amino-acid chain; its full sequence is MTDQRKGSDAEPTTHFGFKNVPESQKAEKVAEVFHSVAAKYDLMNDLLSGGMHRLWKRFAIELSGVRAGNRVLDIAGGTGDLTKKFSHLVGPTGQVVLADINESMLKVGRDRLLDVGVSGNVEFVQADAEKLPFPDNHFDCVTIAFGLRNVTHKEDALRSMLRVLKPGGRLLVLEFSKPTNALMSKAYDAYSFAFMPLMGKLITNDSESYRYLAESIRMHPNQETLKSMMVDAGFDRVTYHNMTAGIVALHRGIKP.

Residues threonine 79, aspartate 100, and 128-129 (DA) each bind S-adenosyl-L-methionine.

Belongs to the class I-like SAM-binding methyltransferase superfamily. MenG/UbiE family.

The catalysed reaction is a 2-demethylmenaquinol + S-adenosyl-L-methionine = a menaquinol + S-adenosyl-L-homocysteine + H(+). It catalyses the reaction a 2-methoxy-6-(all-trans-polyprenyl)benzene-1,4-diol + S-adenosyl-L-methionine = a 5-methoxy-2-methyl-3-(all-trans-polyprenyl)benzene-1,4-diol + S-adenosyl-L-homocysteine + H(+). The protein operates within quinol/quinone metabolism; menaquinone biosynthesis; menaquinol from 1,4-dihydroxy-2-naphthoate: step 2/2. Its pathway is cofactor biosynthesis; ubiquinone biosynthesis. Functionally, methyltransferase required for the conversion of demethylmenaquinol (DMKH2) to menaquinol (MKH2) and the conversion of 2-polyprenyl-6-methoxy-1,4-benzoquinol (DDMQH2) to 2-polyprenyl-3-methyl-6-methoxy-1,4-benzoquinol (DMQH2). The sequence is that of Ubiquinone/menaquinone biosynthesis C-methyltransferase UbiE from Pseudomonas fluorescens (strain Pf0-1).